The chain runs to 363 residues: Molybdenum import ATP-binding protein ModC (363 aa).

Residues 1-232 (MLDLDLRRRQ…PGLRPLTGRY (232 aa)) enclose the ABC transporter domain. Residue 30–37 (GRSGSGKT) coordinates ATP. Residues 292–358 (RVSIRNVLPA…IKALTIARGD (67 aa)) form the Mop domain.

This sequence belongs to the ABC transporter superfamily. Molybdate importer (TC 3.A.1.8) family. The complex is composed of two ATP-binding proteins (ModC), two transmembrane proteins (ModB) and a solute-binding protein (ModA).

It is found in the cell inner membrane. It catalyses the reaction molybdate(out) + ATP + H2O = molybdate(in) + ADP + phosphate + H(+). Functionally, part of the ABC transporter complex ModABC involved in molybdenum import. Responsible for energy coupling to the transport system. The protein is Molybdenum import ATP-binding protein ModC of Paramagnetospirillum magneticum (strain ATCC 700264 / AMB-1) (Magnetospirillum magneticum).